Reading from the N-terminus, the 473-residue chain is Fumarate hydratase class II 2 (473 aa).

The segment at 1-28 (MAKSARTKTARPATRTETDSFGPIEVPS) is disordered. Substrate is bound by residues 108–110 (SGT), 139–142 (HPND), 149–151 (SSN), and Thr-197. Catalysis depends on His-198, which acts as the Proton donor/acceptor. The active site involves Ser-328. Substrate-binding positions include Ser-329 and 334 to 336 (KVN).

The protein belongs to the class-II fumarase/aspartase family. Fumarase subfamily. As to quaternary structure, homotetramer.

Its subcellular location is the cytoplasm. It catalyses the reaction (S)-malate = fumarate + H2O. It functions in the pathway carbohydrate metabolism; tricarboxylic acid cycle; (S)-malate from fumarate: step 1/1. In terms of biological role, involved in the TCA cycle. Catalyzes the stereospecific interconversion of fumarate to L-malate. The sequence is that of Fumarate hydratase class II 2 from Bradyrhizobium diazoefficiens (strain JCM 10833 / BCRC 13528 / IAM 13628 / NBRC 14792 / USDA 110).